The sequence spans 690 residues: Signal peptide peptidase-like 2C (690 aa).

The signal sequence occupies residues 1–28 (MACLGSLHPLGSLLLLFLLLLLSPEARG). Residues 29-192 (EYGLVRVVSK…APLEPVTDYN (164 aa)) lie on the Lumenal side of the membrane. A PA domain is found at 87-166 (DSSPRQRPLH…AVLRYTDMLD (80 aa)). N-linked (GlcNAc...) asparagine glycosylation is present at asparagine 106. A helical transmembrane segment spans residues 193 to 213 (MAIIFILAVGTVAAGGYWAGL). Residues 214–260 (MEANKLQRRQAQRGGGLGGHNQQQTVAAERSQRAWEDDDFEDAPMDF) are Cytoplasmic-facing. A helical membrane pass occupies residues 261–283 (TPAMTGAVVTMSCSIMILLYFFY). A topological domain (lumenal) is located at residue aspartate 284. The helical transmembrane segment at 285-307 (CFVYVMIGIFSLGASTGLYSCLA) threads the bilayer. Residues 308–328 (PILCHLPLWRYQWVLPGQRVS) lie on the Cytoplasmic side of the membrane. The chain crosses the membrane as a helical span at residues 329–349 (VTWPLLLLAGLCAMVTVLWVI). The Lumenal portion of the chain corresponds to 350 to 354 (HRNED). Residues 355–373 (HWAWLLQDTLGVAYCLFVL) traverse the membrane as a helical segment. The Cytoplasmic segment spans residues 374 to 384 (RRVRLPTFKNC). A helical transmembrane segment spans residues 385-405 (TLFLLALLAFDVFFVFITPLF). Aspartate 395 is a catalytic residue. Over 406 to 448 (TKTGESIMVEVASGPADSSSHERLPMVLKVPRLSFSALTLCNQ) the chain is Lumenal. The chain crosses the membrane as a helical span at residues 449-469 (PFSILGFGDIVVPGFLVAYCH). Aspartate 457 is a catalytic residue. Residues 470 to 482 (RFDMQVQSRQVYY) lie on the Cytoplasmic side of the membrane. A helical membrane pass occupies residues 483–503 (MACTVAYAVGLLVTFVAMILM). Glutamine 504 is a topological domain (lumenal). Residues 505 to 525 (MGQPALLYLVSSTLLTSLAVA) traverse the membrane as a helical segment. The PAL signature appears at 508 to 510 (PAL). Over 526-690 (TCRQEFTLFW…KKSMSAQAPL (165 aa)) the chain is Cytoplasmic. A compositionally biased stretch (basic and acidic residues) spans 564–573 (EDAKDSRTTN). Residues 564–633 (EDAKDSRTTN…DPNELPSGSP (70 aa)) form a disordered region. The segment covering 615 to 624 (SEGWSDTNLD) has biased composition (polar residues).

It belongs to the peptidase A22B family. In terms of assembly, interacts (via active sites) with FREY; the interaction stabilizes FREY1 protein and inhibits SPPL2C proteolytic activity. Post-translationally, glycosylated. In terms of tissue distribution, highly expressed in testis where it is primarily localised in spermatids (at protein level).

The protein localises to the endoplasmic reticulum membrane. Sperm-specific intramembrane-cleaving aspartic protease (I-CLiP) that cleaves distinct tail-anchored proteins and SNARE proteins. In elongated spermatids, modulates intracellular Ca(2+) homeostasis by controlling PLN abundance through proteolytic cleavage. During spermatogenesis, processes SNARE proteins and impacts vesicular trafficking which supports compartmental reorganization in maturating spermatids and may play a role in formation of the acrosome. Its function is as follows. In round spermatids, acts as a scaffold protein supporting FREY1 in IZUMO1 recruitment at the endoplasmic reticulum membrane and coordination of IZUMO1 complex assembly. Stabilizes FREY1 at the endoplasmic reticulum membrane through interaction. May recruit IZUMO1 interaction partners. In terms of biological role, no difference in cleavage specificity compared to isoform 1. The sequence is that of Signal peptide peptidase-like 2C from Mus musculus (Mouse).